We begin with the raw amino-acid sequence, 109 residues long: Protein phosphatase 1 regulatory subunit 1C (109 aa).

A disordered region spans residues 25 to 109; that stretch reads AEQIRKRRPT…TNEREEQRDH (85 aa). Residues 45 to 54 show a composition bias toward basic and acidic residues; it reads NPPEIDDKRG. Over residues 55 to 75 the composition is skewed to polar residues; sequence PNTQGELQNASPKQRKQSVYT. Over residues 100–109 the composition is skewed to basic and acidic residues; that stretch reads TNEREEQRDH.

This sequence belongs to the protein phosphatase inhibitor 1 family.

It localises to the cytoplasm. May increase cell susceptibility to TNF-induced apoptosis. In Homo sapiens (Human), this protein is Protein phosphatase 1 regulatory subunit 1C (PPP1R1C).